Reading from the N-terminus, the 923-residue chain is SPX and EXS domain-containing protein 1 (923 aa).

The region spanning 1 to 326 (MKFGKKLRFE…PMNSSIKLDQ (326 aa)) is the SPX domain. Low complexity-rich tracts occupy residues 94–147 (QEQS…QQQQ) and 186–195 (TTTTTTTTTT). Disordered stretches follow at residues 94–150 (QEQS…QDLK) and 185–208 (PTTT…FKNK). A run of 9 helical transmembrane segments spans residues 382-402 (LKLG…IILF), 416-436 (FVST…VWLW), 471-491 (ASFL…TVTG), 499-519 (PAQV…FFPF), 529-551 (LLFI…RALF), 591-611 (SIAL…QCIL), 620-640 (IHLG…FSAL), 655-675 (ILWC…DVVV), and 700-720 (WSYY…TLTI). The region spanning 585 to 785 (RCNQVNSIAL…KNEVPKVESP (201 aa)) is the EXS domain. The disordered stretch occupies residues 793 to 871 (SSYPYRQDNF…NNSPSGSNSS (79 aa)).

The protein belongs to the SYG1 (TC 2.A.94) family.

It is found in the membrane. This Dictyostelium discoideum (Social amoeba) protein is SPX and EXS domain-containing protein 1.